The following is a 508-amino-acid chain: Small ribosomal subunit protein uS3m (508 aa).

It belongs to the universal ribosomal protein uS3 family. Component of the mitochondrial small ribosomal subunit (mt-SSU). Mature N.crassa 74S mitochondrial ribosomes consist of a small (37S) and a large (54S) subunit. The 37S small subunit contains a 16S ribosomal RNA (16S mt-rRNA) and 32 different proteins. The 54S large subunit contains a 23S rRNA (23S mt-rRNA) and 42 different proteins. uS3m, uS4m and uS5m form the narrow entry site of the mRNA channel.

Its subcellular location is the mitochondrion. Its function is as follows. Component of the mitochondrial ribosome (mitoribosome), a dedicated translation machinery responsible for the synthesis of mitochondrial genome-encoded proteins, including at least some of the essential transmembrane subunits of the mitochondrial respiratory chain. The mitoribosomes are attached to the mitochondrial inner membrane and translation products are cotranslationally integrated into the membrane. uS3m is essential for mitochondrial protein synthesis and required for the maturation of small ribosomal subunits. The polypeptide is Small ribosomal subunit protein uS3m (var1) (Neurospora crassa (strain ATCC 24698 / 74-OR23-1A / CBS 708.71 / DSM 1257 / FGSC 987)).